A 230-amino-acid chain; its full sequence is UPF0758 protein Glov_0523 (230 aa).

Residues 108–230 (RFTSPAQVFD…YFSFVESGLL (123 aa)) enclose the MPN domain. Positions 179, 181, and 192 each coordinate Zn(2+). The JAMM motif signature appears at 179-192 (HNHPSGDPAPSRED).

Belongs to the UPF0758 family.

This Trichlorobacter lovleyi (strain ATCC BAA-1151 / DSM 17278 / SZ) (Geobacter lovleyi) protein is UPF0758 protein Glov_0523.